The chain runs to 206 residues: Outer-membrane lipoprotein carrier protein (206 aa).

A signal peptide spans 1–21 (MKKLLCAVLLSPLLYSNAVLA).

Belongs to the LolA family. Monomer.

The protein localises to the periplasm. Functionally, participates in the translocation of lipoproteins from the inner membrane to the outer membrane. Only forms a complex with a lipoprotein if the residue after the N-terminal Cys is not an aspartate (The Asp acts as a targeting signal to indicate that the lipoprotein should stay in the inner membrane). This is Outer-membrane lipoprotein carrier protein from Shewanella oneidensis (strain ATCC 700550 / JCM 31522 / CIP 106686 / LMG 19005 / NCIMB 14063 / MR-1).